The sequence spans 216 residues: MRLSALLALASKATSSPFYRYGMSRPGSIADKRKNPPWSRRRPVVVEPISDEDWHLFCGDMVEILEGKDAGKQGKVVQVVRQRNWVVLEGLNTHYRYIGRTKDHRGTMIASEAPLLHHQVKLVDPVDRKPTEIQWRFTEAGERVRVSTRSGRIIPKPEFPRADGIVPETWTDGPKDTSVEDALERTYVPRLKTLEEDVMEAMGIQETRRFKKVYWY.

The N-terminal 9 residues, 1 to 9 (MRLSALLAL), are a transit peptide targeting the mitochondrion. S24 is subject to Phosphoserine. The KOW domain occupies 56–89 (LFCGDMVEILEGKDAGKQGKVVQVVRQRNWVVLE).

Belongs to the universal ribosomal protein uL24 family. Component of the mitochondrial ribosome large subunit (39S) which comprises a 16S rRNA and about 50 distinct proteins.

It localises to the mitochondrion. This Mus musculus (Mouse) protein is Large ribosomal subunit protein uL24m (Mrpl24).